A 92-amino-acid polypeptide reads, in one-letter code: Small ribosomal subunit protein uS19c (92 aa).

It belongs to the universal ribosomal protein uS19 family.

The protein localises to the plastid. It localises to the chloroplast. Its function is as follows. Protein S19 forms a complex with S13 that binds strongly to the 16S ribosomal RNA. The polypeptide is Small ribosomal subunit protein uS19c (Phalaenopsis aphrodite subsp. formosana (Moth orchid)).